The chain runs to 126 residues: Holo-[acyl-carrier-protein] synthase (126 aa).

2 residues coordinate Mg(2+): D9 and E58.

Belongs to the P-Pant transferase superfamily. AcpS family. It depends on Mg(2+) as a cofactor.

The protein localises to the cytoplasm. The enzyme catalyses apo-[ACP] + CoA = holo-[ACP] + adenosine 3',5'-bisphosphate + H(+). Its function is as follows. Transfers the 4'-phosphopantetheine moiety from coenzyme A to a Ser of acyl-carrier-protein. The protein is Holo-[acyl-carrier-protein] synthase of Buchnera aphidicola subsp. Cinara cedri (strain Cc).